A 270-amino-acid polypeptide reads, in one-letter code: MSDQQQLPVYKIALGIEYDGSKYYGWQRQNEVRSVQEKLEKALSQVANEPITVFCAGRTDAGVHGTGQVVHFETTAPRKDAAWTLGVNANLPDDIAVRWVKAVPDDFHARFSATARRYRYIIYNHRLRPAVLSKGVTHFYEPLDAERMHRAAQCLLGENDFTSFRAVQCQSRTPWRNVMHINVTRHGPYVVVDIKANAFVHHMVRNIVGSLMEVGAHNQPESWIAELLAAKDRTLAAATAKAEGLYLVAVDYPDRYDLPKPPMGPLFLAD.

Aspartate 60 serves as the catalytic Nucleophile. The tract at residues 107-111 is RNA binding; it reads FHARF. Tyrosine 118 is a substrate binding site. Residues 168–172 form an interaction with tRNA region; that stretch reads QCQSR.

This sequence belongs to the tRNA pseudouridine synthase TruA family. As to quaternary structure, homodimer.

The catalysed reaction is uridine(38/39/40) in tRNA = pseudouridine(38/39/40) in tRNA. Formation of pseudouridine at positions 38, 39 and 40 in the anticodon stem and loop of transfer RNAs. The chain is tRNA pseudouridine synthase A from Shigella boydii serotype 4 (strain Sb227).